The primary structure comprises 663 residues: UvrABC system protein B (663 aa).

Positions 26-183 (DGLESGLAKQ…KRLAEMQYTR (158 aa)) constitute a Helicase ATP-binding domain. An ATP-binding site is contributed by 39–46 (GVTGSGKT). Residues 92–115 (YYDYYQPEAYVPASDTFIEKDASI) carry the Beta-hairpin motif. The Helicase C-terminal domain maps to 430–596 (QVDDLMSEIR…GINKSVEDIL (167 aa)). The UVR domain occupies 624 to 659 (AKQINALEKQMYAHAQNMEFELAAKIRDEYLLLKEQ).

This sequence belongs to the UvrB family. As to quaternary structure, forms a heterotetramer with UvrA during the search for lesions. Interacts with UvrC in an incision complex.

It localises to the cytoplasm. Functionally, the UvrABC repair system catalyzes the recognition and processing of DNA lesions. A damage recognition complex composed of 2 UvrA and 2 UvrB subunits scans DNA for abnormalities. Upon binding of the UvrA(2)B(2) complex to a putative damaged site, the DNA wraps around one UvrB monomer. DNA wrap is dependent on ATP binding by UvrB and probably causes local melting of the DNA helix, facilitating insertion of UvrB beta-hairpin between the DNA strands. Then UvrB probes one DNA strand for the presence of a lesion. If a lesion is found the UvrA subunits dissociate and the UvrB-DNA preincision complex is formed. This complex is subsequently bound by UvrC and the second UvrB is released. If no lesion is found, the DNA wraps around the other UvrB subunit that will check the other stand for damage. The sequence is that of UvrABC system protein B from Legionella pneumophila (strain Corby).